Consider the following 707-residue polypeptide: Choline transporter-like protein 4 (707 aa).

The Cytoplasmic segment spans residues 1–27 (MASEEYGEPAKHDPSFKGPIKKRGCTD). A helical transmembrane segment spans residues 28–48 (IICCVLFMVFLLGYMVVGILA). Over 49–225 (WLYGDPRQVI…KIFEDFAKSW (177 aa)) the chain is Extracellular. N-linked (GlcNAc...) asparagine glycans are attached at residues Asn-62, Asn-140, Asn-176, Asn-191, and Asn-196. Residues 226 to 246 (PWIITALVIAMVVSLLFLILL) form a helical membrane-spanning segment. Topologically, residues 247–249 (RFT) are cytoplasmic. The chain crosses the membrane as a helical span at residues 250-270 (AGILVWVLIVGVIGVIGYGIY). At 271–305 (HCYMEYDTLNKQGVSVSDVGFTFNLGVYFRVKETW) the chain is on the extracellular side. A helical membrane pass occupies residues 306–326 (LAILIVLAVVEAILLLVLLFL). Topologically, residues 327 to 354 (RKRILIAIALIKEASKAIGHIMSSLFYP) are cytoplasmic. The chain crosses the membrane as a helical span at residues 355 to 375 (LVTFVLLVVCVAYWGMTALYL). Topologically, residues 376-442 (ATSGAPIYRI…TNLFNLQIYN (67 aa)) are extracellular. N-linked (GlcNAc...) asparagine glycosylation is found at Asn-389, Asn-397, and Asn-401. A helical transmembrane segment spans residues 443–463 (VIGFLWCINFVIALGQCVLAG). Topologically, residues 464-494 (AFASYYWAFHKPKDIPFFPVAESFMRTLRYH) are cytoplasmic. A helical transmembrane segment spans residues 495–515 (TGSLAFGSLILTIVQLIRIIL). The Extracellular portion of the chain corresponds to 516–556 (EYVDHKLKGAQNPCTRFLLCCLKCCFWCLEKFIKFLNRNAY). The chain crosses the membrane as a helical span at residues 557–577 (IMIAVYGKNFCVSAKNAFKLL). The Cytoplasmic portion of the chain corresponds to 578 to 593 (MRNIVRVVVLDKVTDL). A helical membrane pass occupies residues 594–614 (LIFFGKLIVVGGVGVLAFFFF). Residues 615-633 (SGRIPIPNDSFKSPTLNYY) lie on the Extracellular side of the membrane. Asn-622 carries an N-linked (GlcNAc...) asparagine glycan. Residues 634 to 654 (WIPIITVVLGSYMIAHGFFSV) form a helical membrane-spanning segment. The Cytoplasmic portion of the chain corresponds to 655–707 (YNMCVDTLFLCFLEDLERNDGSQEKPYYMSKSLMSILNKKNRPPKSEEKKKKK).

The protein belongs to the CTL (choline transporter-like) family.

The protein resides in the membrane. Its subcellular location is the apical cell membrane. The enzyme catalyses choline(out) + n H(+)(in) = choline(in) + n H(+)(out). The catalysed reaction is thiamine diphosphate(out) = thiamine diphosphate(in). In terms of biological role, choline transporter that seems to play a role in the choline-acetylcholine system and is required to the efferent innervation of hair cells in the olivocochlear bundle for the maintenance of physiological function of outer hair cells and the protection of hair cells from acoustic injury. Also described as a thiamine pyrophosphate transporter. Its function is as follows. Also described as a thiamine pyrophosphate transporter. In Xenopus laevis (African clawed frog), this protein is Choline transporter-like protein 4 (slc44a4).